A 138-amino-acid chain; its full sequence is Flavodoxin (138 aa).

The Flavodoxin-like domain occupies 1 to 136; sequence MKIVYWSGTG…DCIEFGKKIA (136 aa).

It belongs to the flavodoxin family. FMN is required as a cofactor.

Low-potential electron donor to a number of redox enzymes. The protein is Flavodoxin of Clostridium beijerinckii (Clostridium MP).